The chain runs to 245 residues: tRNA pseudouridine synthase A (245 aa).

The Nucleophile role is filled by D52. Y111 is a substrate binding site.

Belongs to the tRNA pseudouridine synthase TruA family. Homodimer.

It catalyses the reaction uridine(38/39/40) in tRNA = pseudouridine(38/39/40) in tRNA. Formation of pseudouridine at positions 38, 39 and 40 in the anticodon stem and loop of transfer RNAs. This is tRNA pseudouridine synthase A from Rickettsia felis (strain ATCC VR-1525 / URRWXCal2) (Rickettsia azadi).